Consider the following 381-residue polypeptide: GDSL esterase/lipase At3g48460 (381 aa).

An N-terminal signal peptide occupies residues 1–26 (MSSSISPLLTTAISVAILLFSTISTA). Catalysis depends on serine 45, which acts as the Nucleophile. Residues asparagine 112, asparagine 140, and asparagine 258 are each glycosylated (N-linked (GlcNAc...) asparagine). Residues aspartate 344 and histidine 347 contribute to the active site.

Belongs to the 'GDSL' lipolytic enzyme family.

Its subcellular location is the secreted. This is GDSL esterase/lipase At3g48460 from Arabidopsis thaliana (Mouse-ear cress).